The primary structure comprises 218 residues: Putative glutamine transport system permease protein GlnP (218 aa).

An ABC transmembrane type-1 domain is found at 19–208 (TLVTLKYSVI…ILVMLISFIA (190 aa)). 4 consecutive transmembrane segments (helical) span residues 25–45 (YSVI…ICKV), 57–79 (FYTS…FASP), 86–108 (FSVF…SEVI), and 187–207 (FFPM…ISFI).

Belongs to the binding-protein-dependent transport system permease family. HisMQ subfamily.

It localises to the cell inner membrane. Part of the binding-protein-dependent transport system for glutamine; probably responsible for the translocation of the substrate across the membrane. This is Putative glutamine transport system permease protein GlnP (glnP) from Rickettsia felis (strain ATCC VR-1525 / URRWXCal2) (Rickettsia azadi).